Here is a 104-residue protein sequence, read N- to C-terminus: Iron-sulfur cluster assembly protein CyaY (104 aa).

The protein belongs to the frataxin family.

In terms of biological role, involved in iron-sulfur (Fe-S) cluster assembly. May act as a regulator of Fe-S biogenesis. The protein is Iron-sulfur cluster assembly protein CyaY of Aeromonas salmonicida (strain A449).